The chain runs to 453 residues: Bifunctional protein GlmU (453 aa).

The pyrophosphorylase stretch occupies residues 1-225 (MNIVILAAGT…GWETLGVNSK (225 aa)). UDP-N-acetyl-alpha-D-glucosamine is bound by residues 6–9 (LAAG), lysine 20, glutamine 71, 76–77 (GT), 98–100 (YGD), glycine 135, glutamate 150, asparagine 165, and asparagine 223. Aspartate 100 serves as a coordination point for Mg(2+). Position 223 (asparagine 223) interacts with Mg(2+). The linker stretch occupies residues 226–246 (AQLAELERIHQRNLADALLAA). An N-acetyltransferase region spans residues 247–453 (GVTLADPARI…GYVRPVKKKS (207 aa)). Positions 329 and 347 each coordinate UDP-N-acetyl-alpha-D-glucosamine. Residue histidine 359 is the Proton acceptor of the active site. 2 residues coordinate UDP-N-acetyl-alpha-D-glucosamine: tyrosine 362 and asparagine 373. Acetyl-CoA-binding positions include alanine 376, 382–383 (NY), serine 401, and alanine 419.

In the N-terminal section; belongs to the N-acetylglucosamine-1-phosphate uridyltransferase family. It in the C-terminal section; belongs to the transferase hexapeptide repeat family. Homotrimer. Mg(2+) serves as cofactor.

The protein localises to the cytoplasm. The enzyme catalyses alpha-D-glucosamine 1-phosphate + acetyl-CoA = N-acetyl-alpha-D-glucosamine 1-phosphate + CoA + H(+). It carries out the reaction N-acetyl-alpha-D-glucosamine 1-phosphate + UTP + H(+) = UDP-N-acetyl-alpha-D-glucosamine + diphosphate. It participates in nucleotide-sugar biosynthesis; UDP-N-acetyl-alpha-D-glucosamine biosynthesis; N-acetyl-alpha-D-glucosamine 1-phosphate from alpha-D-glucosamine 6-phosphate (route II): step 2/2. The protein operates within nucleotide-sugar biosynthesis; UDP-N-acetyl-alpha-D-glucosamine biosynthesis; UDP-N-acetyl-alpha-D-glucosamine from N-acetyl-alpha-D-glucosamine 1-phosphate: step 1/1. Its pathway is bacterial outer membrane biogenesis; LPS lipid A biosynthesis. In terms of biological role, catalyzes the last two sequential reactions in the de novo biosynthetic pathway for UDP-N-acetylglucosamine (UDP-GlcNAc). The C-terminal domain catalyzes the transfer of acetyl group from acetyl coenzyme A to glucosamine-1-phosphate (GlcN-1-P) to produce N-acetylglucosamine-1-phosphate (GlcNAc-1-P), which is converted into UDP-GlcNAc by the transfer of uridine 5-monophosphate (from uridine 5-triphosphate), a reaction catalyzed by the N-terminal domain. This chain is Bifunctional protein GlmU, found in Burkholderia pseudomallei (strain K96243).